We begin with the raw amino-acid sequence, 1687 residues long: Genome polyprotein (1687 aa).

Positions 1-13 (MRMATPSSAPSVR) are enriched in polar residues. The disordered stretch occupies residues 1-56 (MRMATPSSAPSVRNTEKRKNKKASSKASVSFGAPSPLSSESEDEINYMTPPEQEAQ). The interaction with host MAP1LC3A/LC3 stretch occupies residues 1–116 (MRMATPSSAP…FRRYPHLRPK (116 aa)). The interaction with NTPase stretch occupies residues 117-341 (EDRPDAPSHA…ISIFGEWQAE (225 aa)). Residues 244–341 (SPVQDWNVDP…ISIFGEWQAE (98 aa)) form an interaction with NS4 region. Host ER membrane association regions lie at residues 261-292 (KLRM…KPLN) and 302-341 (WTFS…WQAE). The segment at 342–518 (GPFDLALDVV…GKTCFCQNLA (177 aa)) is interaction with NS1-2, NS4 and homooligomerization. The SF3 helicase domain occupies 476–641 (RISMARAAFE…DDARARAPGD (166 aa)). 504–511 (GRPGIGKT) lines the ATP pocket. The important for mitochondrion targeting stretch occupies residues 595–700 (VIIITTNQQT…AVALVHERHD (106 aa)). Positions 893-898 (DEEYDE) are acidic. O-(5'-phospho-RNA)-tyrosine is present on tyrosine 896. Positions 978 to 994 (WADDDRQVDYGEKINFE) are interaction with host EIF4G. The Peptidase C37 domain occupies 995–1172 (APVSIWSRVV…AATHGEPTLE (178 aa)). Active-site for 3CLpro activity residues include histidine 1024, aspartate 1048, and cysteine 1133. The RdRp catalytic domain maps to 1416–1537 (RYHMDADYTR…STNLELDMVK (122 aa)). Residues aspartate 1420 and aspartate 1422 each coordinate Mg(2+). Residues cysteine 1482 and cysteine 1484 are joined by a disulfide bond. Mg(2+) is bound by residues aspartate 1524, glutamate 1525, and serine 1569.

Homodimer. Interacts with NTPase; this interaction increases the proapoptotic activity of the NTPase and is crucial for the formation of the viral replication complex. Interacts with NS4; this interaction is crucial for the formation of the viral replication complex. Interacts (via N-terminus) with host VAPA. Interacts with host VAPB. In terms of assembly, monomer. As to quaternary structure, homooligomer. Interacts with NS1-2; this interaction increases the proapoptotic activity of the NTPase and is crucial for the formation of the viral replication complex. Interacts with NS4; this interaction increases the proapoptotic activity of the NTPase. Interacts with host G3BP1; this interaction leads to the redistribution of G3BP1 and its cellular partners to the viral replication complexes, thereby preventing the assembly of stress granules. Homodimer. Monomer; in solution. In terms of assembly, interacts with NTPase; this interaction increases the proapoptotic activity of the NTPase. Interacts with NS1-2; this interaction is crucial for the formation of the viral replication complex. As to quaternary structure, monomer. Interacts with the RNA-directed RNA polymerase; this interaction induces the multimerization of the RdRp and enhances its activity. Interacts with host IEF4E; this interaction plays a role in translation of viral proteins. Interacts (via C-terminus) with host IEF4G1 (via central domain); this interaction plays a role in translation of viral proteins. Homohexamer; also forms fibrous hexameric oligomer. Interacts with the viral genome-linked protein; this interaction induces the multimerization of the RdRp and enhances its activity. The cofactor is Mg(2+). Mn(2+) is required as a cofactor. In terms of processing, specific enzymatic cleavages in vivo yield mature proteins. 3CLpro is first autocatalytically cleaved, then processes the whole polyprotein. Cleaved by host CASP3/caspase 3 at 18-22 h.p.i. The cleavage allows NS1 secretion, which is essential for intestinal infection and resistance to IFN-lambda. Post-translationally, VPg is uridylylated by the polymerase and is covalently attached to the 5'-end of the polyadenylated genomic and subgenomic RNAs. This uridylylated form acts as a nucleotide-peptide primer for the polymerase.

Its subcellular location is the host endoplasmic reticulum membrane. It is found in the secreted. The protein localises to the host endosome membrane. The protein resides in the host mitochondrion. It localises to the host cytoplasm. Its subcellular location is the host perinuclear region. It catalyses the reaction a ribonucleoside 5'-triphosphate + H2O = a ribonucleoside 5'-diphosphate + phosphate + H(+). It carries out the reaction Endopeptidase with a preference for cleavage when the P1 position is occupied by Glu-|-Xaa and the P1' position is occupied by Gly-|-Yaa.. The enzyme catalyses RNA(n) + a ribonucleoside 5'-triphosphate = RNA(n+1) + diphosphate. Inhibited by Suramin, Suramin-related compounds and NF023. Inhibited by PPNDS. In terms of biological role, induces the proliferation of the host smooth ER membranes forming long tubular structures. These remodeled membranes probably form the viral factories that contain the replication complex. May play a role in viral replication by interacting with host VAPA, a vesicle-associated membrane protein that plays a role in SNARE-mediated vesicle fusion. This interaction may target replication complex to intracellular membranes. Promotes intestinal tropism and persistent fecal shedding in strain CR6. This function requires Glu-94 and is present in persistant strains. Its function is as follows. Displays NTPase activity, but probably no helicase activity. Displays RNA chaperone-like activity and destabilizes dsRNA. Induces the formation of convoluted membranes derived from the host ER. These remodeled membranes probably form the viral factories that contain the replication complex. Initiates host cell death by targeting the mitochondrial outer membrane, leading to the permeabilization of mitochondria, programmed host cell death and viral egress. Externalization of host cardiolipin seems to be involved in the process. Probably plays a role in preventing the assembly of host stress granules. Functionally, probable key protein responsible for the formation of membrane alterations by the virus. Induces the formation of convoluted membranes derived from the host ER. These remodeled membranes probably form the viral factories that contain the replication complex. May play a role in targeting replication complex to intracellular membranes. In terms of biological role, viral genome-linked protein is covalently linked to the 5'-end of the positive-strand, negative-strand genomic RNAs and subgenomic RNA. Acts as a genome-linked replication primer. May recruit ribosome to viral RNA thereby promoting viral proteins translation. Interacts with host translation initiation complex to allow the translation of viral proteins. Induces the formation of aggregates of RNA-directed RNA polymerase in the presence of RNA. Through its interaction with the viral RNA-directed RNA polymerase, plays a crucial role in enhancing the polymerase activity. Processes the polyprotein. 3CLpro-RdRp is first released by autocleavage, then all other proteins are cleaved. May cleave host polyadenylate-binding protein thereby inhibiting cellular translation. Does not cleave host G3BP1. Its function is as follows. Replicates genomic and antigenomic RNA by recognizing replications specific signals. Also transcribes a subgenomic mRNA by initiating RNA synthesis internally on antigenomic RNA. This sgRNA codes for structural proteins. Catalyzes the covalent attachment VPg with viral RNAs. In Norovirus (isolate Mouse/NoV/United States/MNV1/2002/GV) (MNV-1), this protein is Genome polyprotein.